A 335-amino-acid polypeptide reads, in one-letter code: Phospho-N-acetylmuramoyl-pentapeptide-transferase (335 aa).

10 helical membrane-spanning segments follow: residues 3–23, 53–73, 78–98, 118–138, 143–163, 175–195, 200–220, 226–246, 251–271, and 314–334; these read LTLI…PHFI, GGTV…ILFF, SMGL…IGFL, LSLQ…PSGI, VFGF…FWVV, IDGL…VIAI, YDVL…FIFN, VFMG…ISIA, WTLL…MLQV, and VDAF…AILY.

The protein belongs to the glycosyltransferase 4 family. MraY subfamily. Requires Mg(2+) as cofactor.

The protein resides in the cell membrane. The catalysed reaction is UDP-N-acetyl-alpha-D-muramoyl-L-alanyl-gamma-D-glutamyl-L-lysyl-D-alanyl-D-alanine + di-trans,octa-cis-undecaprenyl phosphate = Mur2Ac(oyl-L-Ala-gamma-D-Glu-L-Lys-D-Ala-D-Ala)-di-trans,octa-cis-undecaprenyl diphosphate + UMP. It participates in cell wall biogenesis; peptidoglycan biosynthesis. Its function is as follows. Catalyzes the initial step of the lipid cycle reactions in the biosynthesis of the cell wall peptidoglycan: transfers peptidoglycan precursor phospho-MurNAc-pentapeptide from UDP-MurNAc-pentapeptide onto the lipid carrier undecaprenyl phosphate, yielding undecaprenyl-pyrophosphoryl-MurNAc-pentapeptide, known as lipid I. In Streptococcus uberis (strain ATCC BAA-854 / 0140J), this protein is Phospho-N-acetylmuramoyl-pentapeptide-transferase.